Consider the following 366-residue polypeptide: Transmembrane protein 25 (366 aa).

The signal sequence occupies residues 1–26; that stretch reads MALPPGPAALRHTLLLLPALLSSGWG. The Extracellular segment spans residues 27 to 232; the sequence is ELEPQIDGQT…APGLLATRVE (206 aa). Residues 30-123 enclose the Ig-like domain; the sequence is PQIDGQTWAE…SGRSANASVI (94 aa). Cys52 and Cys107 form a disulfide bridge. 5 N-linked (GlcNAc...) asparagine glycosylation sites follow: Asn106, Asn162, Asn175, Asn192, and Asn205. A helical membrane pass occupies residues 233–253; sequence VPLLGIVVAAGLALGTLVGFS. Over 254–366 the chain is Cytoplasmic; the sequence is TLVACLVCRK…SSVSSDEIWL (113 aa). Residues 299–308 are compositionally biased toward polar residues; that stretch reads PSNLQLNDLT. Residues 299–335 are disordered; that stretch reads PSNLQLNDLTPDSRAVKPADRQMAQNNSRPELLDPEP.

In terms of assembly, interacts with GRIN2B. In terms of tissue distribution, expressed throughout the brain with higher levels in the pyramidal cell layer of the hippocampal CA1 and CA3 regions. Also highly expressed within the hippocampal dentate gyrus region and cerebellum and in scattered neurons in the cerebral cortex.

The protein resides in the cell membrane. It localises to the secreted. Its subcellular location is the late endosome. The protein localises to the lysosome. In terms of biological role, in neurons, modulates the degradation of NMDA receptor GRIN2B subunit. Plays a role in the regulation of neuronal excitability. This is Transmembrane protein 25 (TMEM25) from Homo sapiens (Human).